A 441-amino-acid polypeptide reads, in one-letter code: Phosphoribosylamine--glycine ligase (441 aa).

Residues 112-319 (RNFMKKYGIE…FTEIMSAVVK (208 aa)) form the ATP-grasp domain. 139–196 (IEKLGDVAVKPSGLTGGKGVKVMGDQLPDLKAAKDYTSELLEKGPVVIEERFIGEEFT) contributes to the ATP binding site. Mg(2+) contacts are provided by Gln-277, Glu-289, and Asn-291. Positions 277, 289, and 291 each coordinate Mn(2+).

Belongs to the GARS family. Requires Mg(2+) as cofactor. The cofactor is Mn(2+).

It catalyses the reaction 5-phospho-beta-D-ribosylamine + glycine + ATP = N(1)-(5-phospho-beta-D-ribosyl)glycinamide + ADP + phosphate + H(+). It participates in purine metabolism; IMP biosynthesis via de novo pathway; N(1)-(5-phospho-D-ribosyl)glycinamide from 5-phospho-alpha-D-ribose 1-diphosphate: step 2/2. The polypeptide is Phosphoribosylamine--glycine ligase (Methanosarcina acetivorans (strain ATCC 35395 / DSM 2834 / JCM 12185 / C2A)).